The primary structure comprises 121 residues: uncharacterized protein (121 aa).

77-84 (AALSFGKT) provides a ligand contact to ATP.

This is an uncharacterized protein from Saccharomyces cerevisiae (strain ATCC 204508 / S288c) (Baker's yeast).